We begin with the raw amino-acid sequence, 874 residues long: Alanine--tRNA ligase (874 aa).

Zn(2+)-binding residues include histidine 564, histidine 568, cysteine 665, and histidine 669.

Belongs to the class-II aminoacyl-tRNA synthetase family. The cofactor is Zn(2+).

The protein localises to the cytoplasm. The enzyme catalyses tRNA(Ala) + L-alanine + ATP = L-alanyl-tRNA(Ala) + AMP + diphosphate. Functionally, catalyzes the attachment of alanine to tRNA(Ala) in a two-step reaction: alanine is first activated by ATP to form Ala-AMP and then transferred to the acceptor end of tRNA(Ala). Also edits incorrectly charged Ser-tRNA(Ala) and Gly-tRNA(Ala) via its editing domain. The chain is Alanine--tRNA ligase from Burkholderia multivorans (strain ATCC 17616 / 249).